Reading from the N-terminus, the 154-residue chain is Myoglobin (154 aa).

A Globin domain is found at 2–148 (VLSEGEWQLV…FRKDIAAKYK (147 aa)). Position 4 is a phosphoserine (Ser-4). Position 65 (His-65) interacts with nitrite. His-65 serves as a coordination point for O2. Residue Thr-68 is modified to Phosphothreonine. His-94 contributes to the heme b binding site.

It belongs to the globin family. In terms of assembly, monomeric.

The protein localises to the cytoplasm. The protein resides in the sarcoplasm. The enzyme catalyses Fe(III)-heme b-[protein] + nitric oxide + H2O = Fe(II)-heme b-[protein] + nitrite + 2 H(+). It catalyses the reaction H2O2 + AH2 = A + 2 H2O. Its function is as follows. Monomeric heme protein which primary function is to store oxygen and facilitate its diffusion within muscle tissues. Reversibly binds oxygen through a pentacoordinated heme iron and enables its timely and efficient release as needed during periods of heightened demand. Depending on the oxidative conditions of tissues and cells, and in addition to its ability to bind oxygen, it also has a nitrite reductase activity whereby it regulates the production of bioactive nitric oxide. Under stress conditions, like hypoxia and anoxia, it also protects cells against reactive oxygen species thanks to its pseudoperoxidase activity. This is Myoglobin (MB) from Physeter macrocephalus (Sperm whale).